A 103-amino-acid polypeptide reads, in one-letter code: MGKLTILFLVAAALLSTQVMVQGDGAHERTEAEEPQHHGAKRQDGTGGYPVDDVDMMQRIFRTPLKRQWCQPGYAYNPVLGICTITLSRIEHPGNYDYRRGRQ.

A signal peptide spans methionine 1–glycine 23. A propeptide spanning residues aspartate 24–arginine 67 is cleaved from the precursor. Positions glycine 25 to aspartate 44 are enriched in basic and acidic residues. The tract at residues glycine 25–proline 50 is disordered. Residue glutamine 68 is modified to Pyrrolidone carboxylic acid. A disulfide bond links cysteine 70 and cysteine 83. Residues arginine 99–glutamine 103 constitute a propeptide that is removed on maturation.

It belongs to the O2 superfamily. Post-translationally, pyrrolidone carboxylic acid at position 1 has no significant effect on the structure of contryphan-Vc1. In terms of tissue distribution, expressed by the venom gland.

It localises to the secreted. Its function is as follows. Unknown. Intracranial injection of the peptide into mice does not produce toxic effects. In addition, the peptide does not produce any observable changes to normal or depolarization-induced intracellular calcium levels in mouse dorsal root ganglion cells. This chain is O2 contryphan Vc1, found in Conus victoriae (Queen Victoria cone).